A 579-amino-acid chain; its full sequence is Methionine--tRNA ligase (579 aa).

The 'HIGH' region motif lies at Pro-14 to Asn-24. Zn(2+) contacts are provided by Cys-146, Cys-149, Cys-159, and Cys-162. The short motif at Lys-346–Ser-350 is the 'KMSKS' region element. Thr-349 contacts ATP.

This sequence belongs to the class-I aminoacyl-tRNA synthetase family. MetG type 1 subfamily. Monomer. Zn(2+) serves as cofactor.

It localises to the cytoplasm. It catalyses the reaction tRNA(Met) + L-methionine + ATP = L-methionyl-tRNA(Met) + AMP + diphosphate. In terms of biological role, is required not only for elongation of protein synthesis but also for the initiation of all mRNA translation through initiator tRNA(fMet) aminoacylation. The sequence is that of Methionine--tRNA ligase from Hyphomonas neptunium (strain ATCC 15444).